Here is a 79-residue protein sequence, read N- to C-terminus: UPF0150 protein ssr1765 (79 aa).

The protein belongs to the UPF0150 family.

In Synechocystis sp. (strain ATCC 27184 / PCC 6803 / Kazusa), this protein is UPF0150 protein ssr1765.